The following is a 404-amino-acid chain: Trigger factor (404 aa).

Residues 160 to 225 (KDHLFVRTEE…VLEVKTLKLP (66 aa)) form the PPIase FKBP-type domain.

This sequence belongs to the FKBP-type PPIase family. Tig subfamily.

The protein localises to the cytoplasm. It carries out the reaction [protein]-peptidylproline (omega=180) = [protein]-peptidylproline (omega=0). Involved in protein export. Acts as a chaperone by maintaining the newly synthesized protein in an open conformation. Functions as a peptidyl-prolyl cis-trans isomerase. In Thermus thermophilus (strain ATCC 27634 / DSM 579 / HB8), this protein is Trigger factor.